A 146-amino-acid polypeptide reads, in one-letter code: Large-conductance mechanosensitive channel (146 aa).

2 consecutive transmembrane segments (helical) span residues A12 to F32 and G83 to I103.

The protein belongs to the MscL family. In terms of assembly, homopentamer.

The protein localises to the cell inner membrane. In terms of biological role, channel that opens in response to stretch forces in the membrane lipid bilayer. May participate in the regulation of osmotic pressure changes within the cell. This is Large-conductance mechanosensitive channel from Phocaeicola vulgatus (strain ATCC 8482 / DSM 1447 / JCM 5826 / CCUG 4940 / NBRC 14291 / NCTC 11154) (Bacteroides vulgatus).